The following is a 255-amino-acid chain: Small ribosomal subunit protein uS2 (255 aa).

It belongs to the universal ribosomal protein uS2 family.

This chain is Small ribosomal subunit protein uS2, found in Streptococcus pyogenes serotype M49 (strain NZ131).